Consider the following 1426-residue polypeptide: DNA-directed RNA polymerase subunit beta' (1426 aa).

Residues Cys-71, Cys-73, Cys-86, and Cys-89 each contribute to the Zn(2+) site. Mg(2+) contacts are provided by Asp-461, Asp-463, and Asp-465. Zn(2+) is bound by residues Cys-814, Cys-888, Cys-895, and Cys-898. The segment at 1392 to 1426 (ADPIAAAESAIGLGGGEQPATSETGAGGSDPSEEG) is disordered.

The protein belongs to the RNA polymerase beta' chain family. The RNAP catalytic core consists of 2 alpha, 1 beta, 1 beta' and 1 omega subunit. When a sigma factor is associated with the core the holoenzyme is formed, which can initiate transcription. Mg(2+) is required as a cofactor. Zn(2+) serves as cofactor.

The catalysed reaction is RNA(n) + a ribonucleoside 5'-triphosphate = RNA(n+1) + diphosphate. DNA-dependent RNA polymerase catalyzes the transcription of DNA into RNA using the four ribonucleoside triphosphates as substrates. This is DNA-directed RNA polymerase subunit beta' from Alkalilimnicola ehrlichii (strain ATCC BAA-1101 / DSM 17681 / MLHE-1).